The sequence spans 359 residues: Fructose-bisphosphate aldolase (359 aa).

S50 contributes to the D-glyceraldehyde 3-phosphate binding site. The Proton donor role is filled by D83. Positions 84, 105, 142, and 198 each coordinate Zn(2+). A dihydroxyacetone phosphate-binding site is contributed by G199. Residue H232 coordinates Zn(2+). Dihydroxyacetone phosphate is bound by residues 233-235 and 275-278; these read GSS and NIDT.

The protein belongs to the class II fructose-bisphosphate aldolase family. As to quaternary structure, homodimer. It depends on Zn(2+) as a cofactor.

It carries out the reaction beta-D-fructose 1,6-bisphosphate = D-glyceraldehyde 3-phosphate + dihydroxyacetone phosphate. It participates in carbohydrate biosynthesis; Calvin cycle. The protein operates within carbohydrate degradation; glycolysis; D-glyceraldehyde 3-phosphate and glycerone phosphate from D-glucose: step 4/4. Catalyzes the aldol condensation of dihydroxyacetone phosphate (DHAP or glycerone-phosphate) with glyceraldehyde 3-phosphate (G3P) to form fructose 1,6-bisphosphate (FBP) in gluconeogenesis and the reverse reaction in glycolysis. In Sinorhizobium medicae (strain WSM419) (Ensifer medicae), this protein is Fructose-bisphosphate aldolase (cbbA).